The chain runs to 219 residues: 2-C-methyl-D-erythritol 4-phosphate cytidylyltransferase (219 aa).

The protein belongs to the IspD/TarI cytidylyltransferase family. IspD subfamily.

The enzyme catalyses 2-C-methyl-D-erythritol 4-phosphate + CTP + H(+) = 4-CDP-2-C-methyl-D-erythritol + diphosphate. It participates in isoprenoid biosynthesis; isopentenyl diphosphate biosynthesis via DXP pathway; isopentenyl diphosphate from 1-deoxy-D-xylulose 5-phosphate: step 2/6. In terms of biological role, catalyzes the formation of 4-diphosphocytidyl-2-C-methyl-D-erythritol from CTP and 2-C-methyl-D-erythritol 4-phosphate (MEP). This is 2-C-methyl-D-erythritol 4-phosphate cytidylyltransferase from Bacteroides thetaiotaomicron (strain ATCC 29148 / DSM 2079 / JCM 5827 / CCUG 10774 / NCTC 10582 / VPI-5482 / E50).